Reading from the N-terminus, the 986-residue chain is E3 ubiquitin-protein ligase Arkadia (986 aa).

Glycyl lysine isopeptide (Lys-Gly) (interchain with G-Cter in SUMO2) cross-links involve residues Lys-19, Lys-28, Lys-34, Lys-47, Lys-59, Lys-73, Lys-87, Lys-96, and Lys-110. Positions 66–89 (HLCDDSQKQEKDMNGNQQEQEKSL) are enriched in basic and acidic residues. The disordered stretch occupies residues 66 to 106 (HLCDDSQKQEKDMNGNQQEQEKSLVVRKKRKSQQAGPSYVQ). Positions 120-191 (QHLGTPSDED…HKWPRTETES (72 aa)) are disordered. Positions 132-151 (SSFSDCLSSPSSSLHFGDSD) are enriched in low complexity. Residues 164–173 (RHSQTILNAK) show a composition bias toward polar residues. Residue Lys-173 forms a Glycyl lysine isopeptide (Lys-Gly) (interchain with G-Cter in SUMO2) linkage. The span at 174 to 184 (SRSHSARSHKW) shows a compositional bias: basic residues. Residues Lys-198 and Lys-218 each participate in a glycyl lysine isopeptide (Lys-Gly) (interchain with G-Cter in SUMO2) cross-link. Residues 241-404 (VLARRKYALL…VPTTSARMES (164 aa)) form an interaction with AXIN1 region. The segment at 248 to 277 (ALLPSSSSSSENDLSSESSSSSSTEGEEDL) is disordered. The span at 252-271 (SSSSSSENDLSSESSSSSST) shows a compositional bias: low complexity. An SUMO interaction motif 1 (SIM) motif is present at residues 300–304 (VVVIE). Residues 325–331 (EVEIVTV) carry the SUMO interaction motif 2 (SIM) motif. A disordered region spans residues 337 to 373 (SRSTLGHSRSHWSQGSSSHASRPQEPRNRSRISTVIQ). Residues 347–357 (HWSQGSSSHAS) are compositionally biased toward low complexity. Positions 382 to 386 (VVDLT) match the SUMO interaction motif 3 (SIM) motif. Disordered regions lie at residues 389–471 (EDEP…ETGP), 506–561 (QQHG…SYHE), 610–646 (APSQ…RHYM), 659–684 (HQAS…VDYV), and 696–719 (ISSH…TAAP). A compositionally biased stretch (polar residues) spans 395–466 (VPTTSARMES…DSRRTTSSAV (72 aa)). The span at 508-522 (HGHHFQHHHHHHHTP) shows a compositional bias: basic residues. Positions 551–561 (ANSSSGTSYHE) are enriched in polar residues. Residues 670–680 (NPPPQTQPPPQ) show a composition bias toward pro residues. Positions 907–909 (YPH) are ubiquitin binding. Glycyl lysine isopeptide (Lys-Gly) (interchain with G-Cter in SUMO2) cross-links involve residues Lys-915 and Lys-919. Positions 934 and 937 each coordinate Zn(2+). The RING-type; atypical zinc-finger motif lies at 934 to 975 (CTICLSILEEGEDVRRLPCMHLFHQVCVDQWLITNKKCPICR). Positions 949-953 (RLPCM) are ubiquitin binding. Zn(2+) contacts are provided by His-957 and Cys-960.

Belongs to the Arkadia family. As to quaternary structure, monomer. Interacts with SMAD6, SMAD7, AXIN1, AXIN2 and SKIL isoform SNON. Interacts with (phosphorylated) SMAD2 and SMAD3. Part of a complex containing RNF111, AXIN1 and SMAD7. Interacts (via SIM domains) with SUMO1 and SUMO2.

Its subcellular location is the nucleus. It localises to the cytoplasm. The protein resides in the PML body. The enzyme catalyses S-ubiquitinyl-[E2 ubiquitin-conjugating enzyme]-L-cysteine + [acceptor protein]-L-lysine = [E2 ubiquitin-conjugating enzyme]-L-cysteine + N(6)-ubiquitinyl-[acceptor protein]-L-lysine.. It functions in the pathway protein modification; protein ubiquitination. Its activity is regulated as follows. Binds free ubiquitin non-covalently via its RING-type zinc finger. Ubiquitin-binding leads to enhance the E3 ubiquitin-protein ligase activity by stabilizing the ubiquitin-conjugating enzyme E2 (donor ubiquitin) in the 'closed' conformation and activating ubiquitin transfer. In terms of biological role, E3 ubiquitin-protein ligase. Required for mesoderm patterning during embryonic development. Acts as an enhancer of the transcriptional responses of the SMAD2/SMAD3 effectors, which are activated downstream of BMP. Acts by mediating ubiquitination and degradation of SMAD inhibitors such as SMAD7, inducing their proteasomal degradation and thereby enhancing the transcriptional activity of TGF-beta and BMP. In addition to enhance transcription of SMAD2/SMAD3 effectors, also regulates their turnover by mediating their ubiquitination and subsequent degradation, coupling their activation with degradation, thereby ensuring that only effectors 'in use' are degraded. Activates SMAD3/SMAD4-dependent transcription by triggering signal-induced degradation of SNON isoform of SKIL. Associates with UBE2D2 as an E2 enzyme. Specifically binds polysumoylated chains via SUMO interaction motifs (SIMs) and mediates ubiquitination of sumoylated substrates. Catalyzes 'Lys-63'-linked ubiquitination of sumoylated XPC in response to UV irradiation, promoting nucleotide excision repair. Mediates ubiquitination and degradation of sumoylated PML. The regulation of the BMP-SMAD signaling is however independent of sumoylation and is not dependent of SUMO interaction motifs (SIMs). The protein is E3 ubiquitin-protein ligase Arkadia (RNF111) of Pongo abelii (Sumatran orangutan).